The primary structure comprises 1405 residues: DNA-directed RNA polymerase subunit beta' (1405 aa).

Cys-65, Cys-67, Cys-80, and Cys-83 together coordinate Zn(2+). Asp-468, Asp-470, and Asp-472 together coordinate Mg(2+). Zn(2+) contacts are provided by Cys-811, Cys-885, Cys-892, and Cys-895.

The protein belongs to the RNA polymerase beta' chain family. In terms of assembly, the RNAP catalytic core consists of 2 alpha, 1 beta, 1 beta' and 1 omega subunit. When a sigma factor is associated with the core the holoenzyme is formed, which can initiate transcription. The cofactor is Mg(2+). Zn(2+) is required as a cofactor.

It catalyses the reaction RNA(n) + a ribonucleoside 5'-triphosphate = RNA(n+1) + diphosphate. In terms of biological role, DNA-dependent RNA polymerase catalyzes the transcription of DNA into RNA using the four ribonucleoside triphosphates as substrates. The protein is DNA-directed RNA polymerase subunit beta' of Azobacteroides pseudotrichonymphae genomovar. CFP2.